The following is a 98-amino-acid chain: Cytochrome c2 (98 aa).

Glutamine 1 carries the pyrrolidone carboxylic acid modification. The heme c site is built by cysteine 10, cysteine 13, histidine 14, and methionine 76.

The protein belongs to the cytochrome c family. Post-translationally, binds 1 heme c group covalently per subunit.

It is found in the periplasm. Functionally, cytochrome c2 is found mainly in purple, non-sulfur, photosynthetic bacteria where it functions as the electron donor to the oxidized bacteriochlorophyll in the photophosphorylation pathway. However, it may also have a role in the respiratory chain and is found in some non-photosynthetic bacteria. The sequence is that of Cytochrome c2 from Rhodoplanes tepidamans (Rhodoplanes cryptolactis).